Consider the following 164-residue polypeptide: Phosphopantetheine adenylyltransferase (164 aa).

Ser-9 lines the substrate pocket. ATP-binding positions include 9-10 (SF) and His-17. Residues Lys-41, Leu-73, and Arg-87 each coordinate substrate. ATP-binding positions include 88 to 90 (GLR), Glu-98, and 123 to 129 (YTFLSSS).

This sequence belongs to the bacterial CoaD family. Homohexamer. Mg(2+) is required as a cofactor.

Its subcellular location is the cytoplasm. It catalyses the reaction (R)-4'-phosphopantetheine + ATP + H(+) = 3'-dephospho-CoA + diphosphate. It participates in cofactor biosynthesis; coenzyme A biosynthesis; CoA from (R)-pantothenate: step 4/5. Reversibly transfers an adenylyl group from ATP to 4'-phosphopantetheine, yielding dephospho-CoA (dPCoA) and pyrophosphate. In Dictyoglomus thermophilum (strain ATCC 35947 / DSM 3960 / H-6-12), this protein is Phosphopantetheine adenylyltransferase.